The sequence spans 129 residues: uncharacterized protein (129 aa).

Residue Lys121 forms an Isoglutamyl lysine isopeptide (Lys-Gln) (interchain with Q-Cter in protein Pup) linkage.

This is an uncharacterized protein from Mycolicibacterium smegmatis (strain ATCC 700084 / mc(2)155) (Mycobacterium smegmatis).